Consider the following 127-residue polypeptide: Fluoride-specific ion channel FluC (127 aa).

A run of 4 helical transmembrane segments spans residues 4-24 (LLLA…LLSM), 35-55 (LGTL…FAWF), 71-91 (TGFC…VFLL), and 103-123 (VFVN…LFSA). Residues G75 and T78 each coordinate Na(+).

It belongs to the fluoride channel Fluc/FEX (TC 1.A.43) family.

It is found in the cell inner membrane. It catalyses the reaction fluoride(in) = fluoride(out). Its activity is regulated as follows. Na(+) is not transported, but it plays an essential structural role and its presence is essential for fluoride channel function. Functionally, fluoride-specific ion channel. Important for reducing fluoride concentration in the cell, thus reducing its toxicity. The sequence is that of Fluoride-specific ion channel FluC from Escherichia coli O81 (strain ED1a).